We begin with the raw amino-acid sequence, 247 residues long: Probable transcriptional regulatory protein Hhal_2210 (247 aa).

It belongs to the TACO1 family.

Its subcellular location is the cytoplasm. The chain is Probable transcriptional regulatory protein Hhal_2210 from Halorhodospira halophila (strain DSM 244 / SL1) (Ectothiorhodospira halophila (strain DSM 244 / SL1)).